Reading from the N-terminus, the 398-residue chain is MVAGIHSLLLLQFYQILLSGCTGLVPEEGKRKYSESTRSSPQQSQQVLDQFELRLLNMFGLKRRPTPGKNVVIPPYMLDLYHLHSAQLADDQGSSEVDYHMERAASRANTVRSFHHEESMEEIPESGEKTIQRFFFNLSSIPDEELVTSSELRIFREQVQEPFKTDGSKLHRINIYDIVKPAAAASRGPVVRLLDTRLIHHNESKWESFDVTPAITRWIAHKQPNHGFVVEVTHLDNDTNVPKRHVRISRSLTLDKGHWPRIRPLLVTFSHDGKGHALHKRQKRQARHKQRKRLKSSCRRHPLYVDFSDVGWNDWIVAPPGYHAFYCHGECPFPLADHLNSTNHAIVQTLVNSVNTNIPKACCVPTELSAISMLYLDENEKVVLKNYQDMVVEGCGCR.

The N-terminal stretch at 1-23 (MVAGIHSLLLLQFYQILLSGCTG) is a signal peptide. Positions 24–284 (LVPEEGKRKY…GHALHKRQKR (261 aa)) are excised as a propeptide. Asparagine 137, asparagine 202, asparagine 237, and asparagine 340 each carry an N-linked (GlcNAc...) asparagine glycan. 3 cysteine pairs are disulfide-bonded: cysteine 298–cysteine 363, cysteine 327–cysteine 395, and cysteine 331–cysteine 397.

It belongs to the TGF-beta family. In terms of assembly, homodimer; disulfide-linked.

The protein resides in the secreted. Its function is as follows. Induces cartilage and bone formation. The chain is Bone morphogenetic protein 2-B (bmp2-b) from Xenopus laevis (African clawed frog).